A 535-amino-acid chain; its full sequence is Potassium channel subfamily K member 10 (535 aa).

The Cytoplasmic portion of the chain corresponds to 1–68 (MYFSYIGYFF…GLQTVMKWKT (68 aa)). A helical membrane pass occupies residues 69 to 89 (VVAIFVVVVVYLVTGGLVFRA). An intramembrane region (pore-forming) is located at residues 151 to 177 (LGSAFFFAGTVITTIGYGNIAPSTEGG). K(+) is bound by residues threonine 164, isoleucine 165, glycine 166, and tyrosine 167. Residues 164–169 (TIGYGN) are selectivity filter 1. Residues 179–199 (IFCILYAIFGIPLFGFLLAGI) traverse the membrane as a helical segment. At 200–230 (GDQLGTIFGKSIARVEKVFRKKQVSQTKIRV) the chain is on the cytoplasmic side. The helical transmembrane segment at 231 to 251 (ISTILFILAGCIVFVTIPAVI) threads the bilayer. Residues 260–291 (ALESIYFVVVTLTTVGFGDFVAGGNAGINYRE) constitute an intramembrane region (pore-forming). K(+)-binding residues include threonine 273, valine 274, glycine 275, and phenylalanine 276. The tract at residues 273–278 (TVGFGD) is selectivity filter 2. The helical transmembrane segment at 296 to 316 (LVWFWILVGLAYFAAVLSMIG) threads the bilayer. Topologically, residues 317-535 (DWLRVLSKKT…ENNSLLEDRN (219 aa)) are cytoplasmic. Disordered regions lie at residues 410–438 (QESINNRPNNLRLKGPEQLTKHGQGASED) and 510–535 (EMENGMVPTDTKDQGLENNSLLEDRN). Positions 525–535 (LENNSLLEDRN) are enriched in polar residues.

Homodimer; disulfide-linked. Forms heterodimers with other 2-pore domain K(+) channel subunits, such as KCNK2, KCNK4 and KCNK18. As to expression, detected in dorsal root ganglia (DRG) neurons (at protein level).

It localises to the cell membrane. It carries out the reaction K(+)(in) = K(+)(out). It catalyses the reaction Rb(+)(in) = Rb(+)(out). The enzyme catalyses Cs(+)(in) = Cs(+)(out). Activated by stimuli such as mechanical stretch, acidic pH and polyunsaturated free fatty acids. Activated by a dihydroacridine analog, ML67-33. Inhibited by polycationic dye ruthenium red. Selectively activated by T2A3 (2-[(4-chloro-3-methylphenyl)amino] benzoic acid). Its function is as follows. K(+) channel that conducts voltage-dependent outward rectifying currents upon membrane depolarization. Voltage sensing is coupled to K(+) electrochemical gradient in an 'ion flux gating' mode where outward but not inward ion flow opens the gate. Converts to voltage-independent 'leak' conductance mode upon stimulation by various stimuli including mechanical membrane stretch, acidic pH, heat and lipids. Homo- and heterodimerizes to form functional channels with distinct regulatory and gating properties. In trigeminal ganglia sensory neurons, the heterodimer of KCNK10/TREK-2 and KCNK18/TRESK inhibits neuronal firing and neurogenic inflammation by stabilizing the resting membrane potential at K(+) equilibrium potential as well as by regulating the threshold of action potentials and the spike frequency. Permeable to other monovalent ions such as Rb(+) and Cs(+). The protein is Potassium channel subfamily K member 10 of Mus musculus (Mouse).